Here is a 3142-residue protein sequence, read N- to C-terminus: Huntingtin (3142 aa).

Residues 3 to 13 (TLEKLMKAFES) form a sufficient for interaction with TPR region. Lysine 9 is modified (N6-acetyllysine). The tract at residues 14-85 (LKSFQQQQQQ…PGPAVAEEPL (72 aa)) is disordered. Positions 18–37 (QQQQQQQQQQQQQQQQQQQQ) are enriched in low complexity. Positions 38 to 78 (QPPPPPPPPPPPQLPQPPPQAQPLLPQPQPPPPPPPPPPGP) are enriched in pro residues. Residues lysine 176 and lysine 234 each carry the N6-acetyllysine modification. HEAT repeat units follow at residues 204–241 (PYLV…SFGN), 246–283 (NEIK…HSRR), and 316–360 (LTLR…VYEL). An N6-acetyllysine modification is found at lysine 343. Serine 411, serine 417, serine 419, and serine 432 each carry phosphoserine. Lysine 442 is subject to N6-acetyllysine. Residues 447–469 (EEEALEDDSESRSDVSSSALTAS) form a disordered region. The tract at residues 491 to 502 (GHDIITEQPRSQ) is interaction with ZDHHC17. The disordered stretch occupies residues 517–583 (LTSSATDGDE…TPSDSSEIVL (67 aa)). A compositionally biased stretch (low complexity) spans 531-545 (SHSSSQVSAVPSDPA). Residues 550 to 579 (DGTQASSPISDSSQTTTEGPDSAVTPSDSS) show a composition bias toward polar residues. Glycine 551 is lipidated: N-myristoyl glycine. Serine 640 and serine 643 each carry phosphoserine. HEAT repeat units lie at residues 802 to 839 (FSLA…SLCS) and 902 to 940 (KLQE…KLFY). Residues 1176-1225 (PSLSPIRRKGKEKEPGEQASVPLSPKKGSEASAASRQSDTSGPVTTSKSS) form a disordered region. Serine 1179 and serine 1199 each carry phosphoserine; by CDK5. The segment covering 1207–1225 (SAASRQSDTSGPVTTSKSS) has biased composition (polar residues). 2 positions are modified to phosphoserine: serine 1870 and serine 1874. Residues 2330–2351 (ERRTNTPKAISEEEEEVDPNTQ) form a disordered region. A Nuclear export signal motif is present at residues 2395 to 2404 (IIISLARLPL). The disordered stretch occupies residues 2633–2662 (EEEWDEEEEEEADAPAPSSPPTSPVNSRKH). Positions 2634 to 2645 (EEWDEEEEEEAD) are enriched in acidic residues.

Belongs to the huntingtin family. Interacts with PFN1. Interacts through its N-terminus with PRPF40A. Interacts with PQBP1. Interacts with SETD2. Interacts with SH3GLB1. Interacts with SYVN. Interacts with TPR; the interaction is inhibited by forms of Huntingtin with expanded polyglutamine stretch. Interacts with ZDHHC13 (via ANK repeats). Interacts with ZDHHC17 (via ANK repeats). Interacts with F8A1/F8A2/F8A3. Found in a complex with F8A1/F8A2/F8A3, HTT and RAB5A; mediates the recruitment of HTT by RAB5A. In terms of processing, cleaved by caspases downstream of the polyglutamine stretch. The resulting N-terminal fragments are cytotoxic and provokes apoptosis. Forms with expanded polyglutamine expansion are specifically ubiquitinated by SYVN1, which promotes their proteasomal degradation. Post-translationally, phosphorylation at Ser-1179 and Ser-1199 by CDK5 in response to DNA damage in nuclei of neurons protects neurons against polyglutamine expansion as well as DNA damage mediated toxicity. In terms of processing, myristoylated at Gly-551, following proteolytic cleavage at Asp-550. As to expression, expressed in the brain cortex (at protein level). Widely expressed with the highest level of expression in the brain (nerve fibers, varicosities, and nerve endings). In the brain, the regions where it can be mainly found are the cerebellar cortex, the neocortex, the striatum, and the hippocampal formation.

It localises to the cytoplasm. The protein localises to the nucleus. Its subcellular location is the early endosome. It is found in the cytoplasmic vesicle. The protein resides in the autophagosome. In terms of biological role, may play a role in microtubule-mediated transport or vesicle function. Its function is as follows. Promotes the formation of autophagic vesicles. The chain is Huntingtin (HTT) from Homo sapiens (Human).